The following is a 524-amino-acid chain: Putative ribose/galactose/methyl galactoside import ATP-binding protein 1 (524 aa).

ABC transporter domains lie at Leu-35–Glu-271 and Val-281–Asp-520. Gly-67–Ser-74 is a binding site for ATP.

Belongs to the ABC transporter superfamily. Carbohydrate importer 2 (CUT2) (TC 3.A.1.2) family.

Its subcellular location is the cell inner membrane. The catalysed reaction is D-ribose(out) + ATP + H2O = D-ribose(in) + ADP + phosphate + H(+). It carries out the reaction D-galactose(out) + ATP + H2O = D-galactose(in) + ADP + phosphate + H(+). Functionally, part of an ABC transporter complex involved in carbohydrate import. Could be involved in ribose, galactose and/or methyl galactoside import. Responsible for energy coupling to the transport system. The sequence is that of Putative ribose/galactose/methyl galactoside import ATP-binding protein 1 from Burkholderia cenocepacia (strain HI2424).